A 299-amino-acid polypeptide reads, in one-letter code: Biotin synthase (299 aa).

A Radical SAM core domain is found at 22 to 252 (TSNLKLDLCS…NVTIKIAAGR (231 aa)). Cys-40, Cys-44, and Cys-47 together coordinate [4Fe-4S] cluster. 3 residues coordinate [2Fe-2S] cluster: Cys-116, Cys-176, and Lys-247.

It belongs to the radical SAM superfamily. Biotin synthase family. As to quaternary structure, homodimer. [4Fe-4S] cluster serves as cofactor. Requires [2Fe-2S] cluster as cofactor.

It carries out the reaction (4R,5S)-dethiobiotin + (sulfur carrier)-SH + 2 reduced [2Fe-2S]-[ferredoxin] + 2 S-adenosyl-L-methionine = (sulfur carrier)-H + biotin + 2 5'-deoxyadenosine + 2 L-methionine + 2 oxidized [2Fe-2S]-[ferredoxin]. The protein operates within cofactor biosynthesis; biotin biosynthesis; biotin from 7,8-diaminononanoate: step 2/2. Its function is as follows. Catalyzes the conversion of dethiobiotin (DTB) to biotin by the insertion of a sulfur atom into dethiobiotin via a radical-based mechanism. This chain is Biotin synthase, found in Thermotoga petrophila (strain ATCC BAA-488 / DSM 13995 / JCM 10881 / RKU-1).